Consider the following 244-residue polypeptide: Orotidine 5'-phosphate decarboxylase (244 aa).

Substrate contacts are provided by residues Asp10, Lys32, 59-68 (DLKLHDIPNT), Thr122, Arg184, Gln193, Gly213, and Arg214. Lys61 serves as the catalytic Proton donor.

Belongs to the OMP decarboxylase family. Type 1 subfamily. In terms of assembly, homodimer.

The catalysed reaction is orotidine 5'-phosphate + H(+) = UMP + CO2. It participates in pyrimidine metabolism; UMP biosynthesis via de novo pathway; UMP from orotate: step 2/2. Functionally, catalyzes the decarboxylation of orotidine 5'-monophosphate (OMP) to uridine 5'-monophosphate (UMP). This is Orotidine 5'-phosphate decarboxylase from Bacillus caldolyticus.